A 2528-amino-acid chain; its full sequence is Squalestatin tetraketide synthase clz2 (2528 aa).

The 396-residue stretch at 14-409 (TVPIAIVGMS…GANAHVILES (396 aa)) folds into the Ketosynthase family 3 (KS3) domain. Residues C187, H291, and H331 each act as for beta-ketoacyl synthase activity in the active site. Residues 420–457 (VNGHHQKNGTTNGHKGANGTTNELNGTNGTANGHDITT) form a disordered region. Low complexity predominate over residues 436–452 (ANGTTNELNGTNGTANG). The segment at 538–856 (GAQWFAMGRE…PYLSCLLRGQ (319 aa)) is malonyl-CoA:ACP transacylase (MAT) domain. The segment at 925–1063 (HDLLGSLIPG…GRIAIELDTS (139 aa)) is N-terminal hotdog fold. The 315-residue stretch at 925 to 1239 (HDLLGSLIPG…NQSVGQIALQ (315 aa)) folds into the PKS/mFAS DH domain. Residues 925–1239 (HDLLGSLIPG…NQSVGQIALQ (315 aa)) form a dehydratase (DH) domain region. The active-site Proton acceptor; for dehydratase activity is H957. Positions 1083–1239 (TRSVDPSNLY…NQSVGQIALQ (157 aa)) are C-terminal hotdog fold. The active-site Proton donor; for dehydratase activity is D1148. Residues 1390–1590 (LYRYYTDAIK…GLDVELRDCD (201 aa)) are methyltransferase (CMet) domain. Positions 1817-2130 (GLIDTLQFSK…AGKHMGKIVI (314 aa)) are enoyl reductase (ER) (ER) domain. Residues 2153–2331 (ASYLIVGGLG…AVSIDLGMVQ (179 aa)) are ketoreductase (KR) domain. Residues 2408 to 2430 (RARDAKEQSNSQGGGTDSKISPG) form a disordered region. Positions 2441 to 2518 (EAIDVVGRAI…ALATTVATKS (78 aa)) constitute a Carrier domain. The residue at position 2478 (S2478) is an O-(pantetheine 4'-phosphoryl)serine.

The protein operates within secondary metabolite biosynthesis. Highly reducing polyketide synthase (HR-PKS); part of the gene cluster that mediates the biosynthesis of squalestatin S1 (SQS1, also known as zaragozic acid A), a heavily oxidized fungal polyketide that offers potent cholesterol lowering activity by targeting squalene synthase (SS). SQS1 is composed of a 2,8-dioxobicyclic[3.2.1]octane-3,4,5-tricarboxyclic acid core that is connected to two lipophilic polyketide arms. These initial steps feature the priming of an unusual benzoic acid starter unit onto the highly reducing polyketide synthase clz14, followed by oxaloacetate extension and product release to generate a tricarboxylic acid containing product. The phenylalanine ammonia lyase (PAL) clz10 and the acyl-CoA ligase clz12 are involved in transforming phenylalanine into benzoyl-CoA. The citrate synthase-like protein clz17 is involved in connecting the C-alpha-carbons of the hexaketide chain and oxaloacetate to afford the tricarboxylic acid unit. The potential hydrolytic enzymes, clz11 and clz13, are in close proximity to pks2 and may participate in product release. On the other side, the tetraketide arm is synthesized by a the squalestatin tetraketide synthase clz2 and enzymatically esterified to the core in the last biosynthetic step, by the acetyltransferase clz6. The biosynthesis of the tetraketide must involve 3 rounds of chain extension. After the first and second rounds methyl-transfer occurs, and in all rounds of extension the ketoreductase and dehydratase are active. The enoyl reductase and C-MeT of clz2 are not active in the final round of extension. The acetyltransferase clz6 appears to have a broad substrate selectivity for its acyl CoA substrate, allowing the in vitro synthesis of novel squalestatins. The biosynthesis of SQS1 requires several oxidative steps likely performed by oxidoreductases clz3, clz15 and clz16. Finally, in support of the identification of the cluster as being responsible for SQS1 production, the cluster contains a gene encoding a putative squalene synthase (SS) clz20, suggesting a likely mechanism for self-resistance. The polypeptide is Squalestatin tetraketide synthase clz2 (Cochliobolus lunatus (Filamentous fungus)).